The primary structure comprises 328 residues: MALRMPFNQAFWEEYLSGQDATLPSLPDTSTLSSRVIRILGGNPGAMHLQGTNTYLVGTGPSRILIDTGQGLPIWLSRIVGVLHSNNISISHILLTHWHGDHTGGVPDLISYNPTLGEHVYKNLPDAGQKPIEDGQIFAVEGATVRAVFTPGHSVDHMCFLLEEENALFTGDNVLGHGFSVAPDLGRYMESLELMAGLGCVLGYPAHGAVIGDLPSKLEEYIRHKEMRVQGILSVLVKERERVEGDRGTEGRRKGGMTLHEIARAMFGTVPDEVIDQAMAPFLMQALWKLTEDRKVGFEPGDPVKRKWFAVARRKTKPPRQHGSVARQ.

Zn(2+) is bound by residues histidine 97, histidine 99, aspartate 101, and histidine 102. The active-site Proton donor/acceptor is aspartate 101.

It belongs to the metallo-beta-lactamase superfamily. The cofactor is Zn(2+).

It participates in secondary metabolite biosynthesis. In terms of biological role, lactamase-like protein; part of the gene cluster that mediates the biosynthesis of neosartoricin, a prenylated anthracenone that exhibits T-cell antiproliferative activity, suggestive of a physiological role as an immunosuppressive agent. The non-reducing polyketide synthase nscA probably synthesizes and cyclizes the decaketide backbone. The hydrolase nscB then mediates the product release through hydrolysis followed by spontaneous decarboxylation. The prenyltransferase nscD catalyzes the addition of the dimethylallyl group to the aromatic C5. The FAD-dependent monooxygenase nscC is then responsible for the stereospecific hydroxylation at C2. There is no gene encoding O-acetyltransferase in the nsc gene cluster; thus, the last step of 2-O-acetylation leading to neosartoricin may be catalyzed by an unidentified O-acetyltransferase. This chain is Lactamase-like protein nscB, found in Neosartorya fischeri (strain ATCC 1020 / DSM 3700 / CBS 544.65 / FGSC A1164 / JCM 1740 / NRRL 181 / WB 181) (Aspergillus fischerianus).